The primary structure comprises 574 residues: Proline--tRNA ligase (574 aa).

It belongs to the class-II aminoacyl-tRNA synthetase family. ProS type 1 subfamily. In terms of assembly, homodimer.

The protein localises to the cytoplasm. It catalyses the reaction tRNA(Pro) + L-proline + ATP = L-prolyl-tRNA(Pro) + AMP + diphosphate. Its function is as follows. Catalyzes the attachment of proline to tRNA(Pro) in a two-step reaction: proline is first activated by ATP to form Pro-AMP and then transferred to the acceptor end of tRNA(Pro). As ProRS can inadvertently accommodate and process non-cognate amino acids such as alanine and cysteine, to avoid such errors it has two additional distinct editing activities against alanine. One activity is designated as 'pretransfer' editing and involves the tRNA(Pro)-independent hydrolysis of activated Ala-AMP. The other activity is designated 'posttransfer' editing and involves deacylation of mischarged Ala-tRNA(Pro). The misacylated Cys-tRNA(Pro) is not edited by ProRS. The protein is Proline--tRNA ligase of Nitratidesulfovibrio vulgaris (strain DP4) (Desulfovibrio vulgaris).